The primary structure comprises 364 residues: Envelope glycoprotein US27 (364 aa).

Over 1 to 36 (MTTSTTTTTNIMLQVSNVTNHTLNSTEIYQLFEYTR) the chain is Virion surface. N-linked (GlcNAc...) asparagine; by host glycosylation is found at asparagine 17, asparagine 20, and asparagine 24. Residues 37-57 (FGVWLMCIVGTFLNMLVITTI) form a helical membrane-spanning segment. At 58-69 (LYYRRKKKSPSD) the chain is on the intravirion side. A helical membrane pass occupies residues 70 to 90 (TYICNLAVADLLIVVGLPFFL). At 91 to 103 (EYAKHHPKLSREV) the chain is on the virion surface side. The chain crosses the membrane as a helical span at residues 104-124 (VCSGLNACFYICLFAGVCFLI). Topologically, residues 125-150 (NLSMDRYCVIVWGVELNRVRNNKRAT) are intravirion. A helical membrane pass occupies residues 151–171 (CWVVIFWILAALMGMPHYLMY). Over 172–188 (SHTNNECVGEFANETSG) the chain is Virion surface. The helical transmembrane segment at 189–209 (WFPVFLNTKVNICGYLAPIVL) threads the bilayer. The Intravirion portion of the chain corresponds to 210–234 (MAYTYNRMVRFIINYVGKWHMQTLH). The helical transmembrane segment at 235 to 255 (VLLVVVVSFASFWFPFNLALF) threads the bilayer. Residues 256–279 (LESIRLLSGTQNETLQTVITFCLY) lie on the Virion surface side of the membrane. Residues 280–300 (VGQFLAYVRACLNPGIYILVG) traverse the membrane as a helical segment. Residues 301 to 364 (TQMRKDMWTT…MESGEEEFLL (64 aa)) lie on the Intravirion side of the membrane. Residues 344–364 (KRTHYDRKHAPMESGEEEFLL) are disordered.

Belongs to the G-protein coupled receptor 1 family. Heterodimerizes with US28.

The protein resides in the virion. The protein localises to the host cell membrane. Plays an important role in spread of HCMV via the extracellular route. As a G-protein-coupled receptor (vGPCR), may activate signaling pathways important for virion assembly or egress processes. The protein is Envelope glycoprotein US27 (US27) of Homo sapiens (Human).